The chain runs to 1059 residues: Cellulose synthase catalytic subunit A [UDP-forming] (1059 aa).

Disordered stretches follow at residues Met1–Thr159 and Met174–Ala220. Positions Asn15 to Gly36 are enriched in low complexity. 2 stretches are compositionally biased toward polar residues: residues Gly40–Leu57 and Asn142–Gly154. Positions Gln181 to Gln194 are enriched in low complexity. The span at Gln204–Val219 shows a compositional bias: basic residues. The next 3 membrane-spanning stretches (helical) occupy residues Phe246–Phe266, Ile280–Ala300, and Phe306–Ala323. The catalytic subdomain A stretch occupies residues Lys328 to Gln628. The active site involves Asp370. Substrate contacts are provided by Asp624 and Asp626. Positions Gln701–Ala761 are catalytic subdomain B. The active site involves Asp717. Helical transmembrane passes span Ile790–Ile810 and Val813–Val833. Residues Asp933–Lys953 are disordered. The span at Ser939 to Lys953 shows a compositional bias: basic and acidic residues. 3 consecutive transmembrane segments (helical) span residues Leu963–Leu983, Trp993–Ile1013, and Ile1035–Ile1055.

Belongs to the glycosyltransferase 2 family. It depends on Mg(2+) as a cofactor.

Its subcellular location is the membrane. The enzyme catalyses [(1-&gt;4)-beta-D-glucosyl](n) + UDP-alpha-D-glucose = [(1-&gt;4)-beta-D-glucosyl](n+1) + UDP + H(+). Its pathway is glycan metabolism; amoeba cellulose biosynthesis. Catalytic subunit of cellulose synthase. It incorporates glucose from uridine 5'-diphosphate glucose (UDP-alpha-D-glucose) to cellulose (a (1-&gt;4)-beta-D-glucan), which is produced as an extracellular component for mechanical and chemical protection at the onset of the stalk formation, when the cells exhibit multicellular behavior during culmination. This chain is Cellulose synthase catalytic subunit A [UDP-forming] (dcsA), found in Dictyostelium discoideum (Social amoeba).